Reading from the N-terminus, the 518-residue chain is Integrator complex subunit 14 (518 aa).

Residues 2–204 (PTVVVMDVSL…KNVQSMFGKL (203 aa)) form the VWFA domain. Mg(2+) is bound by residues serine 10, serine 12, and threonine 86. Position 418 is an N6-acetyllysine (lysine 418).

This sequence belongs to the Integrator subunit 14 family. As to quaternary structure, component of the Integrator complex, composed of core subunits INTS1, INTS2, INTS3, INTS4, INTS5, INTS6, INTS7, INTS8, INTS9/RC74, INTS10, INTS11/CPSF3L, INTS12, INTS13, INTS14 and INTS15. The core complex associates with protein phosphatase 2A subunits PPP2CA and PPP2R1A, to form the Integrator-PP2A (INTAC) complex. INTS14 is part of the tail subcomplex, composed of INTS10, INTS13, INTS14 and INTS15.

It is found in the nucleus. In terms of biological role, component of the integrator complex, a multiprotein complex that terminates RNA polymerase II (Pol II) transcription in the promoter-proximal region of genes. The integrator complex provides a quality checkpoint during transcription elongation by driving premature transcription termination of transcripts that are unfavorably configured for transcriptional elongation: the complex terminates transcription by (1) catalyzing dephosphorylation of the C-terminal domain (CTD) of Pol II subunit POLR2A/RPB1 and SUPT5H/SPT5, (2) degrading the exiting nascent RNA transcript via endonuclease activity and (3) promoting the release of Pol II from bound DNA. The integrator complex is also involved in terminating the synthesis of non-coding Pol II transcripts, such as enhancer RNAs (eRNAs), small nuclear RNAs (snRNAs), telomerase RNAs and long non-coding RNAs (lncRNAs). Within the integrator complex, INTS14 is part of the integrator tail module that acts as a platform for the recruitment of transcription factors at promoters. This chain is Integrator complex subunit 14, found in Bos taurus (Bovine).